We begin with the raw amino-acid sequence, 435 residues long: Methylenetetrahydrofolate--tRNA-(uracil-5-)-methyltransferase TrmFO (435 aa).

Residue Gly-7–Gly-12 coordinates FAD.

This sequence belongs to the MnmG family. TrmFO subfamily. FAD is required as a cofactor.

It localises to the cytoplasm. It carries out the reaction uridine(54) in tRNA + (6R)-5,10-methylene-5,6,7,8-tetrahydrofolate + NADH + H(+) = 5-methyluridine(54) in tRNA + (6S)-5,6,7,8-tetrahydrofolate + NAD(+). The catalysed reaction is uridine(54) in tRNA + (6R)-5,10-methylene-5,6,7,8-tetrahydrofolate + NADPH + H(+) = 5-methyluridine(54) in tRNA + (6S)-5,6,7,8-tetrahydrofolate + NADP(+). Catalyzes the folate-dependent formation of 5-methyl-uridine at position 54 (M-5-U54) in all tRNAs. This is Methylenetetrahydrofolate--tRNA-(uracil-5-)-methyltransferase TrmFO from Thermotoga petrophila (strain ATCC BAA-488 / DSM 13995 / JCM 10881 / RKU-1).